A 404-amino-acid chain; its full sequence is L-cysteine:1D-myo-inositol 2-amino-2-deoxy-alpha-D-glucopyranoside ligase (404 aa).

Cys-47 provides a ligand contact to Zn(2+). L-cysteinyl-5'-AMP contacts are provided by residues Cys-47–Thr-50, Thr-62, and Asn-85–Thr-87. The 'HIGH' region motif lies at Ile-49–His-59. The 'ERGGDP' region signature appears at Glu-188–Pro-193. Trp-228 contributes to the L-cysteinyl-5'-AMP binding site. Position 232 (Cys-232) interacts with Zn(2+). Residue Gly-250 to Asp-252 participates in L-cysteinyl-5'-AMP binding. A Zn(2+)-binding site is contributed by His-257. Ile-284 is a binding site for L-cysteinyl-5'-AMP. A 'KMSKS' region motif is present at residues Lys-290–Ser-294.

Belongs to the class-I aminoacyl-tRNA synthetase family. MshC subfamily. Monomer. The cofactor is Zn(2+).

The catalysed reaction is 1D-myo-inositol 2-amino-2-deoxy-alpha-D-glucopyranoside + L-cysteine + ATP = 1D-myo-inositol 2-(L-cysteinylamino)-2-deoxy-alpha-D-glucopyranoside + AMP + diphosphate + H(+). In terms of biological role, catalyzes the ATP-dependent condensation of GlcN-Ins and L-cysteine to form L-Cys-GlcN-Ins. This Corynebacterium striatum protein is L-cysteine:1D-myo-inositol 2-amino-2-deoxy-alpha-D-glucopyranoside ligase.